The following is a 139-amino-acid chain: Small ribosomal subunit protein bS16 (139 aa).

Residues 85–108 form a disordered region; that stretch reads ESKSGKKPAKKATTKEASAKKPTD. The span at 97-108 shows a compositional bias: basic and acidic residues; that stretch reads TTKEASAKKPTD.

This sequence belongs to the bacterial ribosomal protein bS16 family.

This chain is Small ribosomal subunit protein bS16, found in Leuconostoc mesenteroides subsp. mesenteroides (strain ATCC 8293 / DSM 20343 / BCRC 11652 / CCM 1803 / JCM 6124 / NCDO 523 / NBRC 100496 / NCIMB 8023 / NCTC 12954 / NRRL B-1118 / 37Y).